The following is a 164-amino-acid chain: Phosphatidyl-N-methylethanolamine N-methyltransferase (164 aa).

Positions 1–21 (MGLLAAIGVLLPFPFYWWLWT) form an intramembrane region, helical. At 22–30 (NAQSWVNLC) the chain is on the lumenal side. The helical transmembrane segment at 31-52 (GRERDPSTVMARVSHVLKAAQL) threads the bilayer. At 53-69 (LSLFSVASLSWPPPLYF) the chain is on the cytoplasmic side. Residues 70–90 (WPLMAFGQFLNFRVYQLLGEA) traverse the membrane as a helical segment. 74–76 (AFG) is a binding site for S-adenosyl-L-methionine. Over 91–131 (GTYYGVRFGKNIPWVTEFPFGVIRDPQYVGSIMSLLACLSW) the chain is Lumenal. Residues 132 to 151 (VPFQYILLWSLGYVFMMFLE) traverse the membrane as a helical segment. Topologically, residues 152 to 164 (SKEDPNARAKSIS) are cytoplasmic. 154-155 (ED) provides a ligand contact to S-adenosyl-L-methionine.

This sequence belongs to the class VI-like SAM-binding methyltransferase superfamily. PEMT/PEM2 methyltransferase family.

It localises to the endoplasmic reticulum membrane. It catalyses the reaction a 1,2-diacyl-sn-glycero-3-phospho-N-methylethanolamine + S-adenosyl-L-methionine = a 1,2-diacyl-sn-glycero-3-phospho-N,N-dimethylethanolamine + S-adenosyl-L-homocysteine + H(+). The catalysed reaction is a 1,2-diacyl-sn-glycero-3-phospho-N,N-dimethylethanolamine + S-adenosyl-L-methionine = a 1,2-diacyl-sn-glycero-3-phosphocholine + S-adenosyl-L-homocysteine + H(+). It participates in phospholipid metabolism; phosphatidylcholine biosynthesis. In terms of biological role, catalyzes the second two steps of the methylation pathway of phosphatidylcholine biosynthesis, the SAM-dependent methylation of phosphatidylmonomethylethanolamine (PMME) to phosphatidyldimethylethanolamine (PDME) and of PDME to phosphatidylcholine (PC). This chain is Phosphatidyl-N-methylethanolamine N-methyltransferase (PLMT), found in Arabidopsis thaliana (Mouse-ear cress).